A 251-amino-acid polypeptide reads, in one-letter code: Ly6/PLAUR domain-containing protein 5 (251 aa).

Positions 1–25 (MAMGVPRVILLCLFGAALCLTGSQA) are cleaved as a signal peptide. 2 N-linked (GlcNAc...) asparagine glycosylation sites follow: N120 and N174. The UPAR/Ly6 domain maps to 135–214 (CYACIGVHQD…GSCCEGYLCN (80 aa)). A225 is lipidated: GPI-anchor amidated alanine. Positions 226–251 (SATTPPRALQVLALLLPVLLLVGLSA) are cleaved as a propeptide — removed in mature form.

Its subcellular location is the cell membrane. The protein is Ly6/PLAUR domain-containing protein 5 (LYPD5) of Homo sapiens (Human).